The sequence spans 446 residues: AP-2 complex subunit mu (446 aa).

Residues serine 145, serine 151, and serine 152 each carry the phosphoserine modification. Threonine 157 carries the phosphothreonine modification. An MHD domain is found at 177-445 (KNSIYIDIVE…STRAGTCEIR (269 aa)).

This sequence belongs to the adaptor complexes medium subunit family. Adaptor protein complex 2 (AP-2) is a heterotetramer composed of two large adaptins (alpha-type subunit apl3 and beta-type subunit apl1), a medium chain (mu-type subunit apm4) and a small adaptin (sigma-type subunit aps2).

It is found in the cell membrane. It localises to the membrane. Its subcellular location is the coated pit. In terms of biological role, component of the adaptor complexes which link clathrin to receptors in coated vesicles. Clathrin-associated protein complexes are believed to interact with the cytoplasmic tails of membrane proteins, leading to their selection and concentration. AP50 is a subunit of the plasma membrane adaptor (Potential). The polypeptide is AP-2 complex subunit mu (apm4) (Schizosaccharomyces pombe (strain 972 / ATCC 24843) (Fission yeast)).